A 180-amino-acid polypeptide reads, in one-letter code: MDKKNNLVWIDLEMTGLDPQHDEIIEIATIVTDAQLNILAEGPVIAVYQPEPILAQMDAWNQKHHGASGLIERVRQSSFNTLEAEAQTLSFLEQYSEKGRSPICGNSICQDRRFLSRLMPRLEAFFHYRNLDVSTIKELVARWYPEHYFHKNTTHQALQDIRDSIDELRHYRQRIFVNPS.

Positions 7-168 constitute an Exonuclease domain; sequence LVWIDLEMTG…QDIRDSIDEL (162 aa). Tyr128 is a catalytic residue.

The protein belongs to the oligoribonuclease family.

The protein resides in the cytoplasm. Functionally, 3'-to-5' exoribonuclease specific for small oligoribonucleotides. The sequence is that of Oligoribonuclease from Dichelobacter nodosus (strain VCS1703A).